The following is a 29-amino-acid chain: Conotoxin Bu17 (29 aa).

Intrachain disulfides connect Cys4/Cys19, Cys5/Cys25, and Cys15/Cys26. Residue Cys26 is modified to Cysteine amide.

Belongs to the conotoxin M superfamily. In terms of tissue distribution, expressed by the venom duct.

The protein localises to the secreted. This is Conotoxin Bu17 from Conus bullatus (Bubble cone).